Reading from the N-terminus, the 1122-residue chain is Maestro heat-like repeat-containing protein family member 7 (1122 aa).

Disordered stretches follow at residues 1–144 (MALS…LSED) and 183–203 (SHTI…NTSL). Residues 33-65 (TTPRPTPDLTLAPLPAHGVALAPALHPALSPDP) show a composition bias toward low complexity. Polar residues-rich tracts occupy residues 75-95 (DISN…INTA), 120-136 (PVPS…SPEN), and 184-203 (HTIS…NTSL). Asn-200, Asn-210, Asn-255, Asn-267, and Asn-296 each carry an N-linked (GlcNAc...) asparagine glycan. Residues 246–265 (WNTGSKGSVNVTSNSQPRSG) form a disordered region. The residue at position 356 (Ser-356) is a Phosphoserine. Residues 363-385 (FRSPPEGTSEDAKANESEKRDHD) are disordered. Residues 372–385 (EDAKANESEKRDHD) are compositionally biased toward basic and acidic residues. 2 N-linked (GlcNAc...) asparagine glycosylation sites follow: Asn-541 and Asn-546. 2 helical membrane passes run 548–568 (TLVT…LLLG) and 722–742 (LLPI…ALLM). 4 HEAT repeats span residues 913–950 (QELC…MEQV), 992–1029 (TKVQ…GQAK), 1035–1072 (SVYI…KLRM), and 1080–1117 (EQLT…FFLL).

The protein localises to the membrane. This chain is Maestro heat-like repeat-containing protein family member 7 (Mroh7), found in Rattus norvegicus (Rat).